The chain runs to 142 residues: ATP synthase epsilon chain (142 aa).

Belongs to the ATPase epsilon chain family. As to quaternary structure, F-type ATPases have 2 components, CF(1) - the catalytic core - and CF(0) - the membrane proton channel. CF(1) has five subunits: alpha(3), beta(3), gamma(1), delta(1), epsilon(1). CF(0) has three main subunits: a, b and c.

Its subcellular location is the cell inner membrane. Produces ATP from ADP in the presence of a proton gradient across the membrane. The polypeptide is ATP synthase epsilon chain (Coxiella burnetii (strain CbuK_Q154) (Coxiella burnetii (strain Q154))).